The following is a 187-amino-acid chain: Protein canopy-1 (187 aa).

An N-terminal signal peptide occupies residues 1 to 24 (MSPWIKHICLVLVAAFMLVKTTES). A Saposin B-type domain is found at 28-181 (EALYCSACMA…EVSDHCKSSV (154 aa)). 3 disulfides stabilise this stretch: Cys32–Cys177, Cys35–Cys170, and Cys90–Cys143. Residues 184–187 (HSEL) carry the Prevents secretion from ER motif.

The protein belongs to the canopy family. As to quaternary structure, homodimer. Interacts with fgfr1.

It is found in the endoplasmic reticulum. In terms of biological role, involved in the maintenance of the midbrain-hindbrain boundary (MHB) organizer. Contributes to a positive-feedback loop of FGF signaling in the MHB, enabling the MHB to exert its role as an organizer for the tectal and cerebellar development. This Danio rerio (Zebrafish) protein is Protein canopy-1 (cnpy1).